A 211-amino-acid polypeptide reads, in one-letter code: Vascular-related unknown protein 1 (211 aa).

Residues 1–12 show a composition bias toward polar residues; it reads MMDTFSCNSYEQ. Residues 1–40 are disordered; sequence MMDTFSCNSYEQNHPHDDDIDIDAHDHDSHGGDHQEESGW. Basic and acidic residues predominate over residues 13–37; the sequence is NHPHDDDIDIDAHDHDSHGGDHQEE.

In terms of tissue distribution, expressed in vascular tissues of cotyledons, rosette leaves, sepals, petals, anther filaments. Expressed in roots, inflorescence stems and developing seeds.

It localises to the cytoplasm. The protein localises to the nucleus. In terms of biological role, involved in the regulation of xylem development and growth. May regulate secondary wall formation during vascular development by modulation of brassinosteroid, gibberellin and auxin hormone signaling pathways. This chain is Vascular-related unknown protein 1, found in Arabidopsis thaliana (Mouse-ear cress).